Reading from the N-terminus, the 206-residue chain is dTTP/UTP pyrophosphatase (206 aa).

The active-site Proton acceptor is the Asp-87.

It belongs to the Maf family. YhdE subfamily. A divalent metal cation is required as a cofactor.

The protein localises to the cytoplasm. It catalyses the reaction dTTP + H2O = dTMP + diphosphate + H(+). It carries out the reaction UTP + H2O = UMP + diphosphate + H(+). Nucleoside triphosphate pyrophosphatase that hydrolyzes dTTP and UTP. May have a dual role in cell division arrest and in preventing the incorporation of modified nucleotides into cellular nucleic acids. The chain is dTTP/UTP pyrophosphatase from Aromatoleum aromaticum (strain DSM 19018 / LMG 30748 / EbN1) (Azoarcus sp. (strain EbN1)).